Reading from the N-terminus, the 152-residue chain is S-ribosylhomocysteine lyase (152 aa).

3 residues coordinate Fe cation: H53, H57, and C120.

It belongs to the LuxS family. As to quaternary structure, homodimer. Requires Fe cation as cofactor.

The catalysed reaction is S-(5-deoxy-D-ribos-5-yl)-L-homocysteine = (S)-4,5-dihydroxypentane-2,3-dione + L-homocysteine. Functionally, involved in the synthesis of autoinducer 2 (AI-2) which is secreted by bacteria and is used to communicate both the cell density and the metabolic potential of the environment. The regulation of gene expression in response to changes in cell density is called quorum sensing. Catalyzes the transformation of S-ribosylhomocysteine (RHC) to homocysteine (HC) and 4,5-dihydroxy-2,3-pentadione (DPD). The sequence is that of S-ribosylhomocysteine lyase from Enterococcus faecalis (strain ATCC 700802 / V583).